The chain runs to 426 residues: Histidine--tRNA ligase (426 aa).

It belongs to the class-II aminoacyl-tRNA synthetase family. In terms of assembly, homodimer.

It localises to the cytoplasm. It catalyses the reaction tRNA(His) + L-histidine + ATP = L-histidyl-tRNA(His) + AMP + diphosphate + H(+). The chain is Histidine--tRNA ligase from Streptococcus gordonii (strain Challis / ATCC 35105 / BCRC 15272 / CH1 / DL1 / V288).